Here is a 66-residue protein sequence, read N- to C-terminus: Small ribosomal subunit protein bS21 (66 aa).

This sequence belongs to the bacterial ribosomal protein bS21 family.

The sequence is that of Small ribosomal subunit protein bS21 from Solidesulfovibrio magneticus (strain ATCC 700980 / DSM 13731 / RS-1) (Desulfovibrio magneticus).